Consider the following 294-residue polypeptide: Deubiquitinase OTUD6B (294 aa).

Residues 85–120 (VTSLDLGSEEPVQQPRVSKAQKRREKKAAQEKERDD) are disordered. Over residues 111 to 120 (KAAQEKERDD) the composition is skewed to basic and acidic residues. The 138-residue stretch at 150–287 (LQIRQIPSDG…GEHYNSVEQL (138 aa)) folds into the OTU domain. Residues 155-161 (IPSDGHC) are cys-loop. The active site involves aspartate 158. Catalysis depends on cysteine 161, which acts as the Nucleophile. The variable-loop stretch occupies residues 222 to 232 (IVNTPAWGGQL). The tract at residues 270-280 (YMRHAYGLGEH) is his-loop. Histidine 280 is an active-site residue.

The enzyme catalyses Thiol-dependent hydrolysis of ester, thioester, amide, peptide and isopeptide bonds formed by the C-terminal Gly of ubiquitin (a 76-residue protein attached to proteins as an intracellular targeting signal).. In terms of biological role, deubiquitinating enzyme that may play a role in the ubiquitin-dependent regulation of different cellular processes. The protein is Deubiquitinase OTUD6B (otud6b) of Xenopus laevis (African clawed frog).